Reading from the N-terminus, the 145-residue chain is 3-dehydroquinate dehydratase (145 aa).

Tyr23 acts as the Proton acceptor in catalysis. Residues Asn75, His81, and Asp88 each coordinate substrate. The active-site Proton donor is His101. Substrate-binding positions include 102 to 103 (IS) and Arg112.

The protein belongs to the type-II 3-dehydroquinase family. Homododecamer.

The enzyme catalyses 3-dehydroquinate = 3-dehydroshikimate + H2O. It participates in metabolic intermediate biosynthesis; chorismate biosynthesis; chorismate from D-erythrose 4-phosphate and phosphoenolpyruvate: step 3/7. Its function is as follows. Catalyzes a trans-dehydration via an enolate intermediate. The chain is 3-dehydroquinate dehydratase from Caldicellulosiruptor saccharolyticus (strain ATCC 43494 / DSM 8903 / Tp8T 6331).